The primary structure comprises 281 residues: Sulfur carrier protein FdhD (281 aa).

The active-site Cysteine persulfide intermediate is the Cys117.

The protein belongs to the FdhD family.

It is found in the cytoplasm. Its function is as follows. Required for formate dehydrogenase (FDH) activity. Acts as a sulfur carrier protein that transfers sulfur from IscS to the molybdenum cofactor prior to its insertion into FDH. In Xanthomonas campestris pv. campestris (strain 8004), this protein is Sulfur carrier protein FdhD.